We begin with the raw amino-acid sequence, 330 residues long: Taste receptor type 2 member 136 (330 aa).

Over 1 to 32 the chain is Extracellular; sequence MKSQPVTQELHFIFPLFKTISSDIMSFLVSIA. The chain crosses the membrane as a helical span at residues 33–53; that stretch reads GIAMLAQIVLGTFANVFIVLV. The Cytoplasmic portion of the chain corresponds to 54-73; that stretch reads TCTDCIRRRKLFLADGILTS. A helical membrane pass occupies residues 74-94; the sequence is LAFCRIGMLWVILISWCSIVF. Over 95–122 the chain is Extracellular; that stretch reads HQALSLQVRFSICVGWAVTNHFNMWLAT. The helical transmembrane segment at 123–143 threads the bilayer; the sequence is ILSILYLLKIGNFSNLIFLGL. At 144 to 149 the chain is on the cytoplasmic side; it reads KRKIKS. A helical membrane pass occupies residues 150–170; sequence VFIVVLLASLVLLFPNLITVT. Residues 171–201 are Extracellular-facing; it reads VCETVQANGYRGNLTGKTKRTYFMNLTAMIS. Residues Asn-183 and Asn-195 are each glycosylated (N-linked (GlcNAc...) asparagine). Residues 202 to 222 form a helical membrane-spanning segment; the sequence is FTLDNIISFTISMVCFLLLIY. Residues 223–248 lie on the Cytoplasmic side of the membrane; it reads SLCKHLRTMRLYGKGPHNPSASAHIK. The chain crosses the membrane as a helical span at residues 249-269; sequence ALQAVISFLLLFSMFILSLII. The Extracellular portion of the chain corresponds to 270–283; that stretch reads SGYNYMKPLNEPVH. Residues 284-304 traverse the membrane as a helical segment; that stretch reads LICQLIGTLYPSSHSYVLLWG. Residues 305 to 330 lie on the Cytoplasmic side of the membrane; the sequence is NRRIKLAFVLAMVQVRARLWLKEEKP.

Belongs to the G-protein coupled receptor T2R family.

It is found in the membrane. Functionally, putative taste receptor which may play a role in the perception of bitterness. This is Taste receptor type 2 member 136 from Rattus norvegicus (Rat).